Here is a 1325-residue protein sequence, read N- to C-terminus: Cyclic nucleotide-gated channel beta-1 (1325 aa).

6 disordered regions span residues 1–124 (MLGW…QVAV), 147–198 (PQPV…SLWL), 227–279 (AVLD…PGDP), 340–470 (WEDA…LDSC), 482–637 (LERT…SQNS), and 659–694 (KEKL…PAEA). The Cytoplasmic segment spans residues 1 to 732 (MLGWVQRVLP…SIDPLTNLMY (732 aa)). A compositionally biased stretch (acidic residues) spans 43–81 (PQQEPEPEPEPEPEPEPEPEPEPEPEPEPEPEPVPEEAP). Polar residues predominate over residues 105-121 (LQETQVADPAQPTSQAQ). The span at 370-379 (IPRELTKIQE) shows a compositional bias: basic and acidic residues. Acidic residues-rich tracts occupy residues 380 to 393 (ERED…EEKE), 418 to 463 (EEKE…EEEP), and 495 to 517 (LPEE…EEKK). Positions 518 to 527 (EEEVEKKEEG) are enriched in basic and acidic residues. Over residues 560–571 (TLPPPERPPPSP) the composition is skewed to pro residues. A calmodulin-binding CaM1 region spans residues 633–643 (ASQNSAIINDR). Residues 733-754 (ILWLFFVVLAWNWNCWLIPVRW) form a helical membrane-spanning segment. Topologically, residues 755 to 763 (AFPYQRADN) are extracellular. Residues 764 to 785 (IHFWLLMDYLCDFIYLLDITVF) traverse the membrane as a helical segment. Residues 786-800 (QMRLQFVKGGDIITD) are Cytoplasmic-facing. Residues 801 to 820 (KKEMRNNYLKSRRFKMDLLC) form a helical membrane-spanning segment. Residues 821–836 (LLPLDFLYLKLGINPL) are Extracellular-facing. Residues 837-849 (LRLPRCLKYMAFF) form a helical membrane-spanning segment. At 850–861 (EFNNRLEAILSK) the chain is on the cytoplasmic side. Residues 862–884 (AYVYRVIRTTAYLLYSLHLNSCL) traverse the membrane as a helical segment. Residues 862-961 (AYVYRVIRTT…IGQMRDVVGA (100 aa)) form an ion conduction pathway region. The Extracellular portion of the chain corresponds to 885–907 (YYWASAFQGIGSTHWVYDGVGNS). 2 helical membrane passes run 908–934 (YIRC…LFEI) and 935–960 (VFQL…DVVG). The Cytoplasmic segment spans residues 961–1325 (AATAGQTYYR…VLEEKKEGAE (365 aa)). A C-linker region spans residues 964–1040 (AGQTYYRSCM…SIVSKVALFQ (77 aa)). The cNMP-binding domain stretch occupies residues 1038–1142 (LFQGCDRQMI…LDKKDLNEIL (105 aa)). The cyclic nucleotide-binding domain stretch occupies residues 1044 to 1160 (RQMIFDMLKR…LLRKKARRML (117 aa)). Residues G1105, E1106, S1108, R1118, and T1119 each coordinate 3',5'-cyclic GMP. R1118 lines the 3',5'-cyclic AMP pocket. The tract at residues 1224-1230 (QQQLLEQ) is calmodulin-binding CaM2. A compositionally biased stretch (low complexity) spans 1226-1250 (QLLEQAKSSQEAGGEEGSGATDQPA). Positions 1226–1325 (QLLEQAKSSQ…VLEEKKEGAE (100 aa)) are disordered. Residues 1262–1279 (KPPGPPEPSAQSSPPPAS) show a composition bias toward pro residues.

It belongs to the cyclic nucleotide-gated cation channel (TC 1.A.1.5) family. CNGB1 subfamily. In terms of tissue distribution, rod outer segments. Olfactory sensory neurons.

Its subcellular location is the cell projection. The protein resides in the cilium membrane. It catalyses the reaction Ca(2+)(in) = Ca(2+)(out). It carries out the reaction Na(+)(in) = Na(+)(out). The catalysed reaction is K(+)(in) = K(+)(out). The enzyme catalyses NH4(+)(in) = NH4(+)(out). It catalyses the reaction Rb(+)(in) = Rb(+)(out). It carries out the reaction Li(+)(in) = Li(+)(out). The catalysed reaction is Cs(+)(in) = Cs(+)(out). Pore-forming subunit of the rod cyclic nucleotide-gated channel. Mediates rod photoresponses at dim light converting transient changes in intracellular cGMP levels into electrical signals. In the dark, cGMP levels are high and keep the channel open enabling a steady inward current carried by Na(+) and Ca(2+) ions that leads to membrane depolarization and neurotransmitter release from synaptic terminals. Upon photon absorption cGMP levels decline leading to channel closure and membrane hyperpolarization that ultimately slows neurotransmitter release and signals the presence of light, the end point of the phototransduction cascade. Pore-forming subunit of the olfactory cyclic nucleotide-gated channel. Operates in the cilia of olfactory sensory neurons where chemical stimulation of the odorant is converted to an electrical signal. Mediates odorant-induced cAMP-dependent Ca(2+) influx triggering neuron depolarization. The rise of intracellular Ca(2+) levels potentiates the olfactory response by activating Ca(2+)-dependent Cl(-) channels, but it also serves as a negative feedback signal to desensitize the channel for rapid adaptation to odorants. Conducts cGMP- and cAMP-gated ion currents, with permeability for monovalent and divalent cations. The selectivity for Ca(2+) over Na(+) increases with cGMP concentrations, whereas the selectivity among monovalent ions is independent of the cGMP levels. This Mus musculus (Mouse) protein is Cyclic nucleotide-gated channel beta-1.